A 673-amino-acid chain; its full sequence is uncharacterized protein (673 aa).

At 1-208 (MSTHSNDYFS…STGQLELPPD (208 aa)) the chain is on the cytoplasmic side. 3 positions are modified to phosphoserine: Ser57, Ser112, and Ser172. The chain crosses the membrane as a helical span at residues 209 to 229 (GGYGWVVTFCVFLTMFSTWGC). A glycan (N-linked (GlcNAc...) asparagine) is linked at Asn230. Over 230–255 (NASFGVDLAYYLNHDTYPGASKYDYA) the chain is Lumenal. Residues 256-276 (LIAGLTVFLGQLLSPLVMALM) traverse the membrane as a helical segment. Arg277 is a topological domain (cytoplasmic). The chain crosses the membrane as a helical span at residues 278 to 298 (IIGLRTTMLFGDAVMLAAYLL). Residues 299–315 (ASFTTKLWQLYVTQGFM) lie on the Lumenal side of the membrane. The chain crosses the membrane as a helical span at residues 316 to 336 (VGCSISLIFVPATTVLPGWFL). Over 337–339 (KKR) the chain is Cytoplasmic. Residues 340-360 (AVAMGVSLLGTGAGGVVYGLA) traverse the membrane as a helical segment. The Lumenal portion of the chain corresponds to 361-372 (TNKMLSDFGNTR). The chain crosses the membrane as a helical span at residues 373–393 (WCLRIIGISCSISVLVAIALL). Topologically, residues 394 to 426 (KERNPTPAIGLKSPRAMFEQLKAMFSLKVITKP) are cytoplasmic. A helical membrane pass occupies residues 427-447 (FVVLIALWFMFALFAYNMMVF). Residues 448–504 (TLSSYAISKGLSSHDASTLTAILNGSQSIGRPLMGLAGDKFGRANVTIVLTTLLTIY) are Lumenal-facing. 2 N-linked (GlcNAc...) asparagine glycosylation sites follow: Asn471 and Asn492. The helical transmembrane segment at 505 to 525 (MFAFWIPAHTFVQLIFFSILV) threads the bilayer. Residues 526-549 (GSCVGVANVMNTVLIADMVKPEEF) are Cytoplasmic-facing. Residues 550–570 (LPAWAFVNYCGAPFLLVCEVI) form a helical membrane-spanning segment. The Lumenal segment spans residues 571 to 584 (AQALTVEKDKSNPY). A helical transmembrane segment spans residues 585-605 (LHAQIFCGCCFIAALILISIL). The Cytoplasmic portion of the chain corresponds to 606–673 (REYSIRMKLT…FLRMVYPMKV (68 aa)). Ser637 is subject to Phosphoserine.

This sequence belongs to the major facilitator superfamily. Monocarboxylate porter (TC 2.A.1.13) family.

Its subcellular location is the endoplasmic reticulum membrane. This is an uncharacterized protein from Saccharomyces cerevisiae (strain ATCC 204508 / S288c) (Baker's yeast).